The sequence spans 77 residues: uncharacterized protein (77 aa).

The interval 53-77 (KRVSSEANKEKSDITELLRKQVRPD) is disordered.

This is an uncharacterized protein from Escherichia coli (strain K12).